The sequence spans 246 residues: Sensory transduction protein LytT (246 aa).

The region spanning 3-117 is the Response regulatory domain; sequence KVLVVDDEML…RIVQTLKKYK (115 aa). D54 is modified (4-aspartylphosphate). The HTH LytTR-type domain maps to 142 to 246; the sequence is LALPIEESIV…AKELKKLLRI (105 aa).

Phosphorylated by LytS.

The protein localises to the cytoplasm. Member of the two-component regulatory system LytS/LytT that probably regulates genes involved in cell wall metabolism. This is Sensory transduction protein LytT (lytT) from Bacillus anthracis.